Reading from the N-terminus, the 525-residue chain is uncharacterized protein (525 aa).

2 helical membrane passes run 28 to 48 (FIDV…NLII) and 353 to 373 (GVNA…LFTP). The Pterin-binding domain occupies 146–394 (DIKIGKLKVG…ELKIASKMMF (249 aa)).

The protein localises to the cell membrane. In terms of biological role, unknown. Does not possess dihydropteroate synthase (DHPS) activity since it does not catalyze the condensation of 6-hydroxymethyl-7,8-dihydropterin pyrophosphate (DHPP) and 4-aminobenzoate to form 7,8-dihydropteroate. This is an uncharacterized protein from Methanocaldococcus jannaschii (strain ATCC 43067 / DSM 2661 / JAL-1 / JCM 10045 / NBRC 100440) (Methanococcus jannaschii).